Here is a 469-residue protein sequence, read N- to C-terminus: UTP--glucose-1-phosphate uridylyltransferase 2 (469 aa).

Position 2 is an N-acetylalanine (Ala-2). UTP contacts are provided by residues 85–88 (LNGG), Lys-99, Gln-162, and Gly-191. Residue 87–88 (GG) coordinates substrate. Residues His-192 and 220–222 (NSD) each bind substrate. UTP is bound by residues Asp-222 and Lys-360.

Belongs to the UDPGP type 1 family. Expressed in cauline leaves, flowers and siliques.

It localises to the cytoplasm. The enzyme catalyses alpha-D-glucose 1-phosphate + UTP + H(+) = UDP-alpha-D-glucose + diphosphate. Its function is as follows. Converts glucose 1-phosphate to UDP-glucose, which is the major glycosyl donor for polysaccharides. Acts redundantly with UGP1 and is essential for the synthesis of sucrose, starch and cell wall, and callose deposition. The polypeptide is UTP--glucose-1-phosphate uridylyltransferase 2 (Arabidopsis thaliana (Mouse-ear cress)).